We begin with the raw amino-acid sequence, 417 residues long: Tyrosine--tRNA ligase (417 aa).

Tyrosine 36 contacts L-tyrosine. Positions 41 to 50 (PTADSLHIGH) match the 'HIGH' region motif. The L-tyrosine site is built by tyrosine 170 and glutamine 174. Residues 231–235 (KFGKS) carry the 'KMSKS' region motif. ATP is bound at residue lysine 234. An S4 RNA-binding domain is found at 351-417 (TNLVELLIEA…GKKKYFMIIH (67 aa)).

It belongs to the class-I aminoacyl-tRNA synthetase family. TyrS type 1 subfamily. In terms of assembly, homodimer.

Its subcellular location is the cytoplasm. The catalysed reaction is tRNA(Tyr) + L-tyrosine + ATP = L-tyrosyl-tRNA(Tyr) + AMP + diphosphate + H(+). In terms of biological role, catalyzes the attachment of tyrosine to tRNA(Tyr) in a two-step reaction: tyrosine is first activated by ATP to form Tyr-AMP and then transferred to the acceptor end of tRNA(Tyr). The chain is Tyrosine--tRNA ligase from Macrococcus caseolyticus (strain JCSC5402) (Macrococcoides caseolyticum).